The primary structure comprises 371 residues: GPI mannosyltransferase 1 (371 aa).

8 consecutive transmembrane segments (helical) span residues 64-84 (FPSWGKYLFSISDLIAGWLMI), 120-140 (AILGILSIALLYLIEKKSVWL), 144-164 (ILGFSVHFKIYPFMYGIAFLV), 190-210 (IVVGSLFMFTICNLLMYYLYG), 248-268 (ASSLFAFLPQLSLCMLIPLVF), 290-310 (VCTSQYFMWYLVFLPLVLPNS), 318-338 (LICLSLWIIGQLLWLISAYNL), and 344-364 (SVFIPLWLSGLLFFFFNVYEL).

Belongs to the PIGM family.

Its subcellular location is the endoplasmic reticulum membrane. Its pathway is glycolipid biosynthesis; glycosylphosphatidylinositol-anchor biosynthesis. Functionally, mannosyltransferase involved in glycosylphosphatidylinositol-anchor biosynthesis. Transfers the first alpha-1,4-mannose to GlcN-acyl-PI during GPI precursor assembly. Required for cell wall integrity. The polypeptide is GPI mannosyltransferase 1 (gpi14) (Schizosaccharomyces pombe (strain 972 / ATCC 24843) (Fission yeast)).